The chain runs to 139 residues: Large ribosomal subunit protein uL16 (139 aa).

Belongs to the universal ribosomal protein uL16 family. Part of the 50S ribosomal subunit.

Its function is as follows. Binds 23S rRNA and is also seen to make contacts with the A and possibly P site tRNAs. This chain is Large ribosomal subunit protein uL16, found in Rippkaea orientalis (strain PCC 8801 / RF-1) (Cyanothece sp. (strain PCC 8801)).